We begin with the raw amino-acid sequence, 42 residues long: Photosystem I reaction center subunit IX (42 aa).

The chain crosses the membrane as a helical span at residues 7–27 (YLSAAPVLSTLWLGALAALLI).

Belongs to the PsaJ family.

The protein resides in the plastid membrane. Its function is as follows. May help in the organization of the PsaE and PsaF subunits. This is Photosystem I reaction center subunit IX from Cuscuta reflexa (Southern Asian dodder).